Reading from the N-terminus, the 129-residue chain is Small ribosomal subunit protein uS11 (129 aa).

It belongs to the universal ribosomal protein uS11 family. As to quaternary structure, part of the 30S ribosomal subunit. Interacts with proteins S7 and S18. Binds to IF-3.

In terms of biological role, located on the platform of the 30S subunit, it bridges several disparate RNA helices of the 16S rRNA. Forms part of the Shine-Dalgarno cleft in the 70S ribosome. In Histophilus somni (strain 129Pt) (Haemophilus somnus), this protein is Small ribosomal subunit protein uS11.